Here is a 617-residue protein sequence, read N- to C-terminus: mRNA export factor MEX67 (617 aa).

Gly residues predominate over residues 1–10 (MSYRGRGGGY). Residues 1-24 (MSYRGRGGGYNNNRGQFSSGPHQH) are disordered. 3 LRR repeats span residues 185–206 (DVDSIDLSNNELQDLQTLTSMA), 211–232 (KLQNLSLQNNNFTKIKVFETWR), and 237–258 (FLRELILFNNPIVQTNDPAEIQ). Residues 309 to 499 (LATNFIANYL…MIVASDTLLI (191 aa)) enclose the NTF2 domain. 2 disordered regions span residues 442-469 (EVDGSASSAPSGPRGGSRYHSGPKHKRI) and 513-554 (LPSN…TTAD). 2 stretches are compositionally biased toward low complexity: residues 445–459 (GSASSAPSGPRGGSR) and 526–542 (ATSTPSPLPPTTITTPQ). A TAP-C domain is found at 565–617 (QIQQELLVKILLETKLNINYGIMLCEQSNWDYQQASVNFKNSAASLPSDAFVQ).

This sequence belongs to the NXF family. As to quaternary structure, interacts with nucleoporin complex protein MTR2.

It localises to the nucleus. The protein localises to the cytoplasm. Its function is as follows. Involved in the export of mRNA from the nucleus to the cytoplasm. The protein is mRNA export factor MEX67 of Candida albicans (strain SC5314 / ATCC MYA-2876) (Yeast).